The chain runs to 215 residues: Nascent polypeptide-associated complex subunit alpha-2 (215 aa).

The segment at 1 to 51 (MPGEATETVPATEQELPQSQAETGSGTASDSGESVPGIEEQDSTQTTTQKA) is disordered. The segment covering 9-32 (VPATEQELPQSQAETGSGTASDSG) has biased composition (polar residues). Phosphoserine is present on residues Ser-43 and Ser-132. The region spanning 70–135 (SRSEKRARKA…AKIQDLSQQA (66 aa)) is the NAC-A/B domain. Lys-142 is modified (N6-acetyllysine; alternate). Lys-142 participates in a covalent cross-link: Glycyl lysine isopeptide (Lys-Gly) (interchain with G-Cter in SUMO2); alternate. Thr-161 is modified (phosphothreonine). A phosphoserine mark is found at Ser-166, Ser-186, Ser-191, and Ser-203. The 38-residue stretch at 176–213 (VEVKDVKLVMSQANVSRAKAVRALKNNSNDIVNAIMEL) folds into the UBA domain. Thr-214 is modified (phosphothreonine).

The protein belongs to the NAC-alpha family. Part of the nascent polypeptide-associated complex (NAC), consisting of NACA and BTF3. NAC associates with ribosomes through the BTF3 subunit. Both subunits can contact nascent polypeptide chains. In terms of tissue distribution, expressed specifically in testis and skeletal muscle.

Its subcellular location is the cytoplasm. The protein resides in the nucleus. In terms of biological role, prevents inappropriate targeting of non-secretory polypeptides to the endoplasmic reticulum (ER). Binds to nascent polypeptide chains as they emerge from the ribosome and blocks their interaction with the signal recognition particle (SRP), which normally targets nascent secretory peptides to the ER. Also reduces the inherent affinity of ribosomes for protein translocation sites in the ER membrane (M sites). This Homo sapiens (Human) protein is Nascent polypeptide-associated complex subunit alpha-2 (NACA2).